We begin with the raw amino-acid sequence, 610 residues long: E-selectin (610 aa).

Positions 1–21 (MIASQFLSALTLVLLIKESGA) are cleaved as a signal peptide. One can recognise a C-type lectin domain in the interval 22 to 138 (WSYSASTTNM…CNKKKLALCY (117 aa)). At 22 to 555 (WSYSASTTNM…CEATAKSNIP (534 aa)) the chain is on the extracellular side. The N-linked (GlcNAc...) asparagine glycan is linked to N30. Intrachain disulfides connect C40/C137, C110/C129, C142/C153, C147/C162, C164/C173, C179/C223, C192/C205, C209/C236, C241/C285, C254/C267, C271/C298, C303/C348, C334/C361, C366/C411, C397/C424, C429/C474, C460/C487, C492/C533, and C519/C546. Ca(2+) contacts are provided by E101, N103, and E108. Residues 101-108 (EPNNKQNE), 112-117 (EIYIKR), and 125-127 (NDE) each bind a carbohydrate. 2 residues coordinate Ca(2+): N125 and D126. One can recognise an EGF-like domain in the interval 139–174 (TAACTHTSCSGHGECVETINNYTCQCHPGFTGLRCE). N159 is a glycosylation site (N-linked (GlcNAc...) asparagine). Sushi domains follow at residues 177-238 (VTCQ…ACHV), 239-300 (VECD…TCKA), 314-363 (VNCS…VCKA), 365-426 (QCKA…TCEA), 428-489 (RCDA…SCQV), and 490-548 (VQCA…TCEA). N-linked (GlcNAc...) asparagine glycosylation is found at N198 and N202. N-linked (GlcNAc...) asparagine glycosylation occurs at N264. 3 N-linked (GlcNAc...) asparagine glycosylation sites follow: N315, N327, and N331. An N-linked (GlcNAc...) asparagine glycan is attached at N526. Residues 556–577 (LTVGLSAAGTSLLTLASFLFWL) traverse the membrane as a helical segment. At 578–610 (LKRLRRKAKKFVPASSYQSLQSDGSYQMPSESA) the chain is on the cytoplasmic side.

Belongs to the selectin/LECAM family. In terms of assembly, interacts with SELPLG/PSGL1 and PODXL2 through the sialyl Lewis X epitope. SELPLG sulfation appears not to be required for this interaction.

The protein resides in the cell membrane. In terms of biological role, cell-surface glycoprotein having a role in immunoadhesion. Mediates in the adhesion of blood neutrophils in cytokine-activated endothelium through interaction with SELPLG/PSGL1. May have a role in capillary morphogenesis. The polypeptide is E-selectin (SELE) (Equus caballus (Horse)).